A 360-amino-acid polypeptide reads, in one-letter code: Ribosomal RNA large subunit methyltransferase M (360 aa).

S-adenosyl-L-methionine contacts are provided by residues Ser-187, Cys-220 to Gly-223, Asp-239, Asp-259, and Asp-276. The active-site Proton acceptor is Lys-305.

This sequence belongs to the class I-like SAM-binding methyltransferase superfamily. RNA methyltransferase RlmE family. RlmM subfamily. Monomer.

It is found in the cytoplasm. The enzyme catalyses cytidine(2498) in 23S rRNA + S-adenosyl-L-methionine = 2'-O-methylcytidine(2498) in 23S rRNA + S-adenosyl-L-homocysteine + H(+). Catalyzes the 2'-O-methylation at nucleotide C2498 in 23S rRNA. This is Ribosomal RNA large subunit methyltransferase M from Shewanella halifaxensis (strain HAW-EB4).